The following is a 64-amino-acid chain: OPG024 protein (64 aa).

A disordered region spans residues 1-64 (MSSKGGSSGG…GGVKSGTGKI (64 aa)). Residues 23-34 (NKGSKTYTSSGS) are compositionally biased toward low complexity. Residues 49-64 (VNGGVNGGVKSGTGKI) are compositionally biased toward gly residues.

This sequence belongs to the orthopoxvirus OPG024 family.

This is OPG024 protein (OPG023) from Cynomys gunnisoni (Gunnison's prairie dog).